The sequence spans 511 residues: Bifunctional purine biosynthesis protein PurH (511 aa).

Residues 1-145 form the MGS-like domain; that stretch reads MKKRALVSVS…KNHKFVSVIV (145 aa).

The protein belongs to the PurH family.

The enzyme catalyses (6R)-10-formyltetrahydrofolate + 5-amino-1-(5-phospho-beta-D-ribosyl)imidazole-4-carboxamide = 5-formamido-1-(5-phospho-D-ribosyl)imidazole-4-carboxamide + (6S)-5,6,7,8-tetrahydrofolate. The catalysed reaction is IMP + H2O = 5-formamido-1-(5-phospho-D-ribosyl)imidazole-4-carboxamide. It participates in purine metabolism; IMP biosynthesis via de novo pathway; 5-formamido-1-(5-phospho-D-ribosyl)imidazole-4-carboxamide from 5-amino-1-(5-phospho-D-ribosyl)imidazole-4-carboxamide (10-formyl THF route): step 1/1. The protein operates within purine metabolism; IMP biosynthesis via de novo pathway; IMP from 5-formamido-1-(5-phospho-D-ribosyl)imidazole-4-carboxamide: step 1/1. The protein is Bifunctional purine biosynthesis protein PurH of Bacillus cereus (strain Q1).